The primary structure comprises 281 residues: CCAAT/enhancer-binding protein epsilon (281 aa).

The disordered stretch occupies residues 1-30 (MSHGTYYECEPRGGQQPLEFSGGRAGPGEL). Lys-121 participates in a covalent cross-link: Glycyl lysine isopeptide (Lys-Gly) (interchain with G-Cter in SUMO2). The residue at position 181 (Ser-181) is a Phosphoserine. Residues 204-267 (SLEYRLRRER…DTLRNLFRQI (64 aa)) form the bZIP domain. Residues 208 to 228 (RLRRERNNIAVRKSRDKAKRR) are basic motif. Positions 230–237 (LETQQKVL) are leucine-zipper.

The protein belongs to the bZIP family. C/EBP subfamily. In terms of assembly, binds DNA as a homodimer and as a heterodimer. Can form stable heterodimers with CEBPA, CEBPB and CEBPD. Interacts with GATA1 and SPI1. Interacts with SMARCD2. Post-translationally, phosphorylated. Strongest expression occurs in promyelocyte and late-myeloblast-like cell lines.

The protein resides in the nucleus. Its function is as follows. Transcriptional activator. C/EBP are DNA-binding proteins that recognize two different motifs: the CCAAT homology common to many promoters and the enhanced core homology common to many enhancers. Required for the promyelocyte-myelocyte transition in myeloid differentiation. In Homo sapiens (Human), this protein is CCAAT/enhancer-binding protein epsilon (CEBPE).